The chain runs to 923 residues: Neuropilin-1 (923 aa).

Positions 1–21 (MERGLPLLCATLALALALAGA) are cleaved as a signal peptide. Over 22–856 (FRSDKCGGTI…PGNVLKTLDP (835 aa)) the chain is Extracellular. Cystine bridges form between Cys27–Cys54, Cys82–Cys104, and Cys147–Cys173. CUB domains are found at residues 27-141 (CGGT…YEIF) and 147-265 (CSQN…YSVL). A glycan (N-linked (GlcNAc...) asparagine) is linked at Asn150. Ca(2+)-binding residues include Glu195, Asp209, and Asp250. An intrachain disulfide couples Cys206 to Cys228. Asn261, Asn300, and Asn522 each carry an N-linked (GlcNAc...) asparagine glycan. 2 disulfides stabilise this stretch: Cys275–Cys424 and Cys431–Cys583. F5/8 type C domains are found at residues 275–424 (CMEA…VYGC) and 431–583 (CSGM…LLGC). A glycan (O-linked (Xyl...) (chondroitin sulfate) serine; alternate) is linked at Ser612. A glycan (O-linked (Xyl...) (heparan sulfate) serine; alternate) is linked at Ser612. The MAM domain occupies 645–811 (TYGFNCEFGW…NHISQEDCAK (167 aa)). The tract at residues 820–845 (TEIKIDETGSTPGYEGEGEGDKNISR) is disordered. The O-linked (Xyl...) (chondroitin sulfate) serine glycan is linked to Ser829. Residue Asn842 is glycosylated (N-linked (GlcNAc...) asparagine). The chain crosses the membrane as a helical span at residues 857 to 879 (ILITIIAMSALGVLLGAVCGVVL). The Cytoplasmic portion of the chain corresponds to 880 to 923 (YCACWHNGMSERNLSALENYNFELVDGVKLKKDKLNPQSNYSEA). Ser894 is modified (phosphoserine).

The protein belongs to the neuropilin family. In terms of assembly, homodimer, and heterodimer with NRP2. Binds PLXNB1. Interacts with FER. Interacts with VEGFA. Interacts with ABCB8/MITOSUR in mitochondria. Nervous system.

The protein resides in the mitochondrion membrane. The protein localises to the cell membrane. It is found in the cytoplasm. Its function is as follows. Receptor involved in the development of the cardiovascular system, in angiogenesis, in the formation of certain neuronal circuits and in organogenesis outside the nervous system. Mediates the chemorepulsant activity of semaphorins. Recognizes a C-end rule (CendR) motif R/KXXR/K on its ligands which causes cellular internalization and vascular leakage. Binds to semaphorin 3A (SEMA3A), the PLGF-2 isoform of PGF, the VEGF165 isoform of VEGFA and VEGFB. Coexpression with KDR results in increased VEGF165 binding to KDR as well as increased chemotaxis. Regulates VEGF-induced angiogenesis. Binding to VEGFA initiates a signaling pathway needed for motor neuron axon guidance and cell body migration, including for the caudal migration of facial motor neurons from rhombomere 4 to rhombomere 6 during embryonic development. Regulates mitochondrial iron transport via interaction with ABCB8/MITOSUR. In Mus musculus (Mouse), this protein is Neuropilin-1.